Consider the following 69-residue polypeptide: Protein SlyX homolog (69 aa).

Belongs to the SlyX family.

This is Protein SlyX homolog from Pseudomonas paraeruginosa (strain DSM 24068 / PA7) (Pseudomonas aeruginosa (strain PA7)).